Consider the following 186-residue polypeptide: Peptidyl-tRNA hydrolase (186 aa).

Tyrosine 14 provides a ligand contact to tRNA. Histidine 19 acts as the Proton acceptor in catalysis. TRNA is bound by residues phenylalanine 64, asparagine 66, and asparagine 112.

This sequence belongs to the PTH family. Monomer.

It is found in the cytoplasm. It catalyses the reaction an N-acyl-L-alpha-aminoacyl-tRNA + H2O = an N-acyl-L-amino acid + a tRNA + H(+). Functionally, hydrolyzes ribosome-free peptidyl-tRNAs (with 1 or more amino acids incorporated), which drop off the ribosome during protein synthesis, or as a result of ribosome stalling. Its function is as follows. Catalyzes the release of premature peptidyl moieties from peptidyl-tRNA molecules trapped in stalled 50S ribosomal subunits, and thus maintains levels of free tRNAs and 50S ribosomes. This is Peptidyl-tRNA hydrolase from Anaplasma marginale (strain St. Maries).